The chain runs to 251 residues: Ubiquinone/menaquinone biosynthesis C-methyltransferase UbiE (251 aa).

Residues threonine 74, aspartate 95, 123 to 124 (NA), and serine 140 contribute to the S-adenosyl-L-methionine site.

This sequence belongs to the class I-like SAM-binding methyltransferase superfamily. MenG/UbiE family.

It catalyses the reaction a 2-demethylmenaquinol + S-adenosyl-L-methionine = a menaquinol + S-adenosyl-L-homocysteine + H(+). The catalysed reaction is a 2-methoxy-6-(all-trans-polyprenyl)benzene-1,4-diol + S-adenosyl-L-methionine = a 5-methoxy-2-methyl-3-(all-trans-polyprenyl)benzene-1,4-diol + S-adenosyl-L-homocysteine + H(+). It participates in quinol/quinone metabolism; menaquinone biosynthesis; menaquinol from 1,4-dihydroxy-2-naphthoate: step 2/2. Its pathway is cofactor biosynthesis; ubiquinone biosynthesis. Functionally, methyltransferase required for the conversion of demethylmenaquinol (DMKH2) to menaquinol (MKH2) and the conversion of 2-polyprenyl-6-methoxy-1,4-benzoquinol (DDMQH2) to 2-polyprenyl-3-methyl-6-methoxy-1,4-benzoquinol (DMQH2). This chain is Ubiquinone/menaquinone biosynthesis C-methyltransferase UbiE, found in Yersinia pestis bv. Antiqua (strain Angola).